The following is a 128-amino-acid chain: MNFIKEFREFAMRGNVVDMAVGVIIGSAFGKIVSSLVSDIFMPVLGILTGGIDFKDMKFVLAQAQGDVPAVTLNYGLFIQNVIDFIIIAFAIFMMIKVINKVRKPEEKKPVPKAETLLTEIRDLLKNK.

Transmembrane regions (helical) follow at residues 10–30 and 76–96; these read FAMR…SAFG and GLFI…FMMI.

This sequence belongs to the MscL family. Homopentamer.

The protein localises to the cell inner membrane. In terms of biological role, channel that opens in response to stretch forces in the membrane lipid bilayer. May participate in the regulation of osmotic pressure changes within the cell. The sequence is that of Large-conductance mechanosensitive channel from Haemophilus influenzae (strain PittEE).